Consider the following 346-residue polypeptide: G-protein coupled receptor 42 (346 aa).

Topologically, residues 1–19 are extracellular; sequence MDTGPDQSYFSGNHWFVFS. Residues 20 to 40 form a helical membrane-spanning segment; that stretch reads VYLLTFLVGLPLNLLALVVFV. Residues 41 to 47 are Cytoplasmic-facing; it reads GKLRCRP. The chain crosses the membrane as a helical span at residues 48–68; sequence VAVDVLLLNLTASDLLLLLFL. Residues 69-90 are Extracellular-facing; that stretch reads PFRMVEAANGMHWPLPFILCPL. The helical transmembrane segment at 91–111 threads the bilayer; the sequence is SGFIFFTTIYLTALFLAAVSI. Residues 112-132 lie on the Cytoplasmic side of the membrane; sequence ERFLSVAHPLWYKTRPRLGQA. Residues 133 to 153 form a helical membrane-spanning segment; the sequence is GLVSVACWLLASAHCSVVYVI. The Extracellular portion of the chain corresponds to 154–178; the sequence is EFSGDISHSQGTNGTCYLEFRKDQL. A glycan (N-linked (GlcNAc...) asparagine) is linked at Asn-166. Residues 179 to 199 form a helical membrane-spanning segment; it reads AILLPVRLEMAVVLFVVPLII. Residues 200–222 lie on the Cytoplasmic side of the membrane; sequence TSYCYSRLVWILGRGGSHRRQRR. The helical transmembrane segment at 223-243 threads the bilayer; it reads VAGLVAATLLNFLVCFGPYNV. At 244–258 the chain is on the extracellular side; it reads SHVVGYICGESPVWR. A helical membrane pass occupies residues 259-279; sequence IYVTLLSTLNSCVDPFVYYFS. Topologically, residues 280–346 are cytoplasmic; the sequence is SSGFQADFHE…TGGQVACAEN (67 aa). A compositionally biased stretch (basic and acidic residues) spans 307 to 330; sequence MELKEQKGGEEQRADRPAERKTSE. The tract at residues 307–346 is disordered; it reads MELKEQKGGEEQRADRPAERKTSEHSQGCGTGGQVACAEN.

This sequence belongs to the G-protein coupled receptor 1 family.

It localises to the cell membrane. Functionally, g protein-coupled receptor that is activated by short chain fatty acids (SCFAs), such as propionate. Hence may play a role in the regulation of whole-body energy homeostasis and/or in intestinal immunity. This is G-protein coupled receptor 42 (GPR42) from Homo sapiens (Human).